The primary structure comprises 200 residues: Vacuolar iron transporter homolog 3 (200 aa).

The Cytoplasmic segment spans residues 1–31 (MESHNTLNLDMEKDQEKAFDYSKRAQWLRAA). Residues 32 to 52 (VLGANDGLVSTASLMMGVGAV) traverse the membrane as a helical segment. The Vacuolar portion of the chain corresponds to 53–59 (KQNVKIM). A helical membrane pass occupies residues 60 to 80 (ILTGFAGLVAGACSMAIGEFV). Residues 81–113 (SVYSQYDIEVAQMKRETGGEIEKEKLPSPTQAA) are Cytoplasmic-facing. The chain crosses the membrane as a helical span at residues 114-134 (AASALAFSLGAMVPLLAAAFV). Topologically, residues 135 to 140 (KEYKVR) are vacuolar. A helical transmembrane segment spans residues 141 to 161 (IGAIVAAVTLALVMFGWLGAV). Residues 162-173 (LGKAPVVKSSLR) lie on the Cytoplasmic side of the membrane. The chain crosses the membrane as a helical span at residues 174-194 (VLVGGWLAMAITYGFTKLIGS). Topologically, residues 195-200 (HSHMYV) are vacuolar.

It belongs to the CCC1 family.

Its subcellular location is the vacuole membrane. It catalyses the reaction Fe(2+)(in) = Fe(2+)(out). In terms of biological role, probable vacuolar iron transporter that may be involved in the regulation of iron distribution throughout the plant. The chain is Vacuolar iron transporter homolog 3 from Arabidopsis thaliana (Mouse-ear cress).